Reading from the N-terminus, the 210-residue chain is MATIAIIDYGMGNLRSVQKGFEKVGFEAVVTADPKVVLEAEKVVLPGVGAFRDCMRNLEQGGFVEPILTVIQDGRPFLGICVGMQLLFTDSVEFGLYQGLNVIPGHVLRFPEGMRERGEDLKVPHMGWNQLSIKRRPSAFSDVEDGANVYFVHSFYAKPDEEGVVAATSSYGIDFCAAVWKDNIVATQFHPEKSQAVGLSILKNFALSKA.

Residues 3–210 (TIAIIDYGMG…ILKNFALSKA (208 aa)) enclose the Glutamine amidotransferase type-1 domain. The active-site Nucleophile is the C81. Residues H190 and E192 contribute to the active site.

In terms of assembly, heterodimer of HisH and HisF.

The protein localises to the cytoplasm. The catalysed reaction is 5-[(5-phospho-1-deoxy-D-ribulos-1-ylimino)methylamino]-1-(5-phospho-beta-D-ribosyl)imidazole-4-carboxamide + L-glutamine = D-erythro-1-(imidazol-4-yl)glycerol 3-phosphate + 5-amino-1-(5-phospho-beta-D-ribosyl)imidazole-4-carboxamide + L-glutamate + H(+). The enzyme catalyses L-glutamine + H2O = L-glutamate + NH4(+). It participates in amino-acid biosynthesis; L-histidine biosynthesis; L-histidine from 5-phospho-alpha-D-ribose 1-diphosphate: step 5/9. In terms of biological role, IGPS catalyzes the conversion of PRFAR and glutamine to IGP, AICAR and glutamate. The HisH subunit catalyzes the hydrolysis of glutamine to glutamate and ammonia as part of the synthesis of IGP and AICAR. The resulting ammonia molecule is channeled to the active site of HisF. This is Imidazole glycerol phosphate synthase subunit HisH from Geobacter metallireducens (strain ATCC 53774 / DSM 7210 / GS-15).